Reading from the N-terminus, the 358-residue chain is Trace amine-associated receptor 7c (358 aa).

The Extracellular portion of the chain corresponds to 1–47 (MATDDDSFPWDQDSILSRDLLSASSLQLCYENLNRSCVRSPYSPGSR). Asn34 carries N-linked (GlcNAc...) asparagine glycosylation. 2 disulfide bridges follow: Cys37–Cys201 and Cys120–Cys205. The helical transmembrane segment at 48–68 (LILYAVFGFGAVLAVCGNLLV) threads the bilayer. Topologically, residues 69 to 83 (MTSILHFRQLHSPAN) are cytoplasmic. Residues 84–104 (FLVASLACADLLVGLTVMPFS) form a helical membrane-spanning segment. Residues 105–125 (MVRSVEGCWYFGNTYCKFHSC) are Extracellular-facing. The helical transmembrane segment at 126-148 (FEGSFCYSSLFHLCFISLDRYIA) threads the bilayer. Topologically, residues 149-166 (VSDPLIYPTRFTASISGK) are cytoplasmic. The chain crosses the membrane as a helical span at residues 167–187 (CITFSWLLSIIYSFSLLYTGA). The Extracellular portion of the chain corresponds to 188 to 211 (NEAGLEDLVSALTCVGGCQVAVNQ). Residues 212–232 (SWVFINFLLFLVPALVMMTVY) form a helical membrane-spanning segment. The Cytoplasmic segment spans residues 233-274 (SKIFLIAKQQAQNIEKMSKQTARASESYKDRVAKRERKAAKT). The chain crosses the membrane as a helical span at residues 275–295 (LGIAVAAFLLSWLPYFIDSII). Residues 296-309 (DAFLGFITPTYMYE) are Extracellular-facing. A helical transmembrane segment spans residues 310-332 (ILVWIVYYNSAMNPLIYAFFYPW). At 333-358 (FRKAIKLIVTGKILRENSSTINLFPE) the chain is on the cytoplasmic side.

Belongs to the G-protein coupled receptor 1 family.

Its subcellular location is the cell membrane. Functionally, olfactory receptor specific for N,N-dimethylalkylamines trace amines. Trace amine compounds are enriched in animal body fluids and act on trace amine-associated receptors (TAARs) to elicit both intraspecific and interspecific innate behaviors. Ligand-binding causes a conformation change that triggers signaling via G(s)-class of G alpha proteins (GNAL or GNAS). This is Trace amine-associated receptor 7c from Rattus norvegicus (Rat).